The following is a 447-amino-acid chain: Dihydroorotase (447 aa).

Zn(2+)-binding residues include histidine 84 and histidine 86. Substrate-binding positions include 86–88 (HLR) and asparagine 118. Zn(2+)-binding residues include aspartate 174, histidine 201, and histidine 255. Residue asparagine 301 participates in substrate binding. A Zn(2+)-binding site is contributed by aspartate 328. Aspartate 328 is an active-site residue. Substrate contacts are provided by residues histidine 332 and 346–347 (FG).

Belongs to the metallo-dependent hydrolases superfamily. DHOase family. Class I DHOase subfamily. It depends on Zn(2+) as a cofactor.

The enzyme catalyses (S)-dihydroorotate + H2O = N-carbamoyl-L-aspartate + H(+). It functions in the pathway pyrimidine metabolism; UMP biosynthesis via de novo pathway; (S)-dihydroorotate from bicarbonate: step 3/3. Functionally, catalyzes the reversible cyclization of carbamoyl aspartate to dihydroorotate. This Anaplasma phagocytophilum (strain HZ) protein is Dihydroorotase.